Consider the following 306-residue polypeptide: Glutaminase (306 aa).

Substrate contacts are provided by serine 64, asparagine 115, glutamate 159, asparagine 166, tyrosine 190, tyrosine 242, and valine 260.

Belongs to the glutaminase family. Homotetramer.

It catalyses the reaction L-glutamine + H2O = L-glutamate + NH4(+). This chain is Glutaminase, found in Aliivibrio fischeri (strain MJ11) (Vibrio fischeri).